The chain runs to 457 residues: MTAFSTLNVLPPAQLTNLNELGYLTMTPVQAAALPAILAGKDVRVQAKTGSGKTAAFGLGLLQQIDASLFQTQALVLCPTRELADQVAGELRRLARFLPNTKILTLCGGQPFGMQRDSLQHAPHIIVATPGRLLDHLQKGTVSLDALNTLVMDEADRMLDMGFSDAIDDVIRFAPASRQTLLFSATWPEAIAAISGRVQRDPLAIEIDSTDALPPIEQQFYETSSKGKIPLLQRLLSLHQPSSCVVFCNTKKDCQAVCDALNEVGQSALSLHGDLEQRDRDQTLVRFANGSARVLVATDVAARGLDIKSLELVVNFELAWDPEVHVHRIGRTARAGNSGLAISFCAPEEAQRANIISDMLQIKLNWQTPPANSSIATLEAEMATLCIDGGKKAKMRPGDVLGALTGDIGLDGADIGKIAVHPAHVYVAVRQAVAHKAWKQLQGGKIKGKTCRVRLLK.

The Q motif signature appears at 3–31 (AFSTLNVLPPAQLTNLNELGYLTMTPVQA). In terms of domain architecture, Helicase ATP-binding spans 34-205 (LPAILAGKDV…GRVQRDPLAI (172 aa)). 47-54 (AKTGSGKT) provides a ligand contact to ATP. Positions 153–156 (DEAD) match the DEAD box motif. The Helicase C-terminal domain occupies 230-376 (PLLQRLLSLH…QTPPANSSIA (147 aa)). The tract at residues 383-457 (ATLCIDGGKK…GKTCRVRLLK (75 aa)) is involved in 23S rRNA binding.

It belongs to the DEAD box helicase family. DbpA subfamily. Monomer.

The protein resides in the cytoplasm. It catalyses the reaction ATP + H2O = ADP + phosphate + H(+). Requires hairpin 92 of 23S rRNA for optimal activity. ATPase activity is stimulated by interaction of the N-terminal domain with RNA. Its function is as follows. DEAD-box RNA helicase involved in the assembly of the 50S ribosomal subunit. Has an RNA-dependent ATPase activity, which is specific for 23S rRNA, and a 3' to 5' RNA helicase activity that uses the energy of ATP hydrolysis to destabilize and unwind short rRNA duplexes. Requires a single-stranded RNA loading site on the 3' side of the substrate helix. The chain is ATP-dependent RNA helicase DbpA from Escherichia coli (strain K12).